The sequence spans 49 residues: Large ribosomal subunit protein bL33A (49 aa).

The protein belongs to the bacterial ribosomal protein bL33 family.

This Limosilactobacillus reuteri subsp. reuteri (strain JCM 1112) (Lactobacillus reuteri) protein is Large ribosomal subunit protein bL33A.